The chain runs to 364 residues: Alanine racemase (364 aa).

K34 serves as the catalytic Proton acceptor; specific for D-alanine. The residue at position 34 (K34) is an N6-(pyridoxal phosphate)lysine. R129 lines the substrate pocket. Y259 serves as the catalytic Proton acceptor; specific for L-alanine. M307 contacts substrate.

It belongs to the alanine racemase family. Requires pyridoxal 5'-phosphate as cofactor.

The catalysed reaction is L-alanine = D-alanine. Its pathway is amino-acid biosynthesis; D-alanine biosynthesis; D-alanine from L-alanine: step 1/1. Its function is as follows. Catalyzes the interconversion of L-alanine and D-alanine. May also act on other amino acids. This Coxiella burnetii (strain Dugway 5J108-111) protein is Alanine racemase (alr).